Reading from the N-terminus, the 657-residue chain is tRNA 5-methylaminomethyl-2-thiouridine biosynthesis bifunctional protein MnmC (657 aa).

The interval 1 to 238 (MPASTLLQHA…KWEVMSGEYT (238 aa)) is tRNA (mnm(5)s(2)U34)-methyltransferase. The interval 265-657 (IGAGLAGSAS…FGLRRLIRGK (393 aa)) is FAD-dependent cmnm(5)s(2)U34 oxidoreductase.

It in the N-terminal section; belongs to the methyltransferase superfamily. tRNA (mnm(5)s(2)U34)-methyltransferase family. This sequence in the C-terminal section; belongs to the DAO family. FAD serves as cofactor.

The protein localises to the cytoplasm. The catalysed reaction is 5-aminomethyl-2-thiouridine(34) in tRNA + S-adenosyl-L-methionine = 5-methylaminomethyl-2-thiouridine(34) in tRNA + S-adenosyl-L-homocysteine + H(+). Its function is as follows. Catalyzes the last two steps in the biosynthesis of 5-methylaminomethyl-2-thiouridine (mnm(5)s(2)U) at the wobble position (U34) in tRNA. Catalyzes the FAD-dependent demodification of cmnm(5)s(2)U34 to nm(5)s(2)U34, followed by the transfer of a methyl group from S-adenosyl-L-methionine to nm(5)s(2)U34, to form mnm(5)s(2)U34. This is tRNA 5-methylaminomethyl-2-thiouridine biosynthesis bifunctional protein MnmC from Pseudomonas putida (strain W619).